The chain runs to 261 residues: Methyl jasmonate esterase 1 (261 aa).

An AB hydrolase-1 domain is found at F8–A251. The active-site Acyl-ester intermediate is the S82. Residues D211 and H239 each act as charge relay system in the active site.

It belongs to the AB hydrolase superfamily. Methylesterase family. In terms of assembly, homodimer.

The enzyme catalyses methyl (-)-jasmonate + H2O = jasmonate + methanol + H(+). The catalysed reaction is methyl salicylate + H2O = salicylate + methanol + H(+). The protein operates within plant hormone biosynthesis. Its pathway is lipid metabolism; oxylipin biosynthesis. Functionally, methylesterase that catalyzes the hydrolysis of methyl jasmonate (MeJA) into jasmonate (JA). Can also use methyl salicylate (MeSA) as substrate with a lower efficiency. The polypeptide is Methyl jasmonate esterase 1 (Vitis vinifera (Grape)).